The sequence spans 502 residues: Glutamate decarboxylase 1 (502 aa).

S8 bears the Phosphoserine mark. K277 is subject to N6-(pyridoxal phosphate)lysine. A calmodulin-binding region spans residues 469 to 502 (LMVTVKKSDIDKQRDIITGWKKFVADRKKTSGIC).

The protein belongs to the group II decarboxylase family. As to quaternary structure, homohexamer. Interacts with calmodulin with a 1:3 stoichiometry. Pyridoxal 5'-phosphate is required as a cofactor. Expressed in roots. Detected at low levels in shoots of young seedlings. Not detected in the root tips or in the central vascular bundle in the elongating region of mature roots.

It catalyses the reaction L-glutamate + H(+) = 4-aminobutanoate + CO2. Its activity is regulated as follows. Up-regulated by calmodulin binding at physiological pH. Functionally, catalyzes the conversion of glutamate to 4-aminobutanoate (GABA). The calmodulin-binding is calcium-dependent and it is proposed to directly or indirectly form a calcium regulated control of GABA biosynthesis. This is Glutamate decarboxylase 1 (GAD1) from Arabidopsis thaliana (Mouse-ear cress).